The following is a 261-amino-acid chain: Cytochrome c oxidase subunit 3 (261 aa).

The Mitochondrial matrix segment spans residues 1-15 (MAHQAHAYHMVDPSP). The helical transmembrane segment at 16–34 (WPLTGAIGALFLTSGLAIW) threads the bilayer. The Mitochondrial intermembrane portion of the chain corresponds to 35–40 (FHFQSV). A helical transmembrane segment spans residues 41–66 (TLLTLGLILLLLTMYQWWRDIIREGT). The Mitochondrial matrix portion of the chain corresponds to 67–72 (FQGHHT). The chain crosses the membrane as a helical span at residues 73-105 (PPVQKGLRYGMILFITSEVFFFLGFFWAFYHSS). Residues 106-128 (LAPTPELGGCWPPTGITPLDPFE) lie on the Mitochondrial intermembrane side of the membrane. A helical membrane pass occupies residues 129–152 (VPLLNTAVLLASGVTVTWAHHSLM). Residues 153 to 155 (EGA) are Mitochondrial matrix-facing. Residues 156–183 (RKQAIQALALTIILGVYFTALQAMEYYE) form a helical membrane-spanning segment. Over 184–190 (APFTIAD) the chain is Mitochondrial intermembrane. A helical transmembrane segment spans residues 191–223 (GVYGSTFFVATGFHGLHVIIGSSFLAVCLLRQI). The Mitochondrial matrix segment spans residues 224-232 (QYHFTSEHH). A helical transmembrane segment spans residues 233–256 (FGFEAAAWYWHFVDVVWLFLYVSI). Over 257 to 261 (YWWGS) the chain is Mitochondrial intermembrane.

It belongs to the cytochrome c oxidase subunit 3 family. As to quaternary structure, component of the cytochrome c oxidase (complex IV, CIV), a multisubunit enzyme composed of 14 subunits. The complex is composed of a catalytic core of 3 subunits MT-CO1, MT-CO2 and MT-CO3, encoded in the mitochondrial DNA, and 11 supernumerary subunits COX4I, COX5A, COX5B, COX6A, COX6B, COX6C, COX7A, COX7B, COX7C, COX8 and NDUFA4, which are encoded in the nuclear genome. The complex exists as a monomer or a dimer and forms supercomplexes (SCs) in the inner mitochondrial membrane with NADH-ubiquinone oxidoreductase (complex I, CI) and ubiquinol-cytochrome c oxidoreductase (cytochrome b-c1 complex, complex III, CIII), resulting in different assemblies (supercomplex SCI(1)III(2)IV(1) and megacomplex MCI(2)III(2)IV(2)).

It is found in the mitochondrion inner membrane. The catalysed reaction is 4 Fe(II)-[cytochrome c] + O2 + 8 H(+)(in) = 4 Fe(III)-[cytochrome c] + 2 H2O + 4 H(+)(out). Its function is as follows. Component of the cytochrome c oxidase, the last enzyme in the mitochondrial electron transport chain which drives oxidative phosphorylation. The respiratory chain contains 3 multisubunit complexes succinate dehydrogenase (complex II, CII), ubiquinol-cytochrome c oxidoreductase (cytochrome b-c1 complex, complex III, CIII) and cytochrome c oxidase (complex IV, CIV), that cooperate to transfer electrons derived from NADH and succinate to molecular oxygen, creating an electrochemical gradient over the inner membrane that drives transmembrane transport and the ATP synthase. Cytochrome c oxidase is the component of the respiratory chain that catalyzes the reduction of oxygen to water. Electrons originating from reduced cytochrome c in the intermembrane space (IMS) are transferred via the dinuclear copper A center (CU(A)) of subunit 2 and heme A of subunit 1 to the active site in subunit 1, a binuclear center (BNC) formed by heme A3 and copper B (CU(B)). The BNC reduces molecular oxygen to 2 water molecules using 4 electrons from cytochrome c in the IMS and 4 protons from the mitochondrial matrix. The protein is Cytochrome c oxidase subunit 3 (mt-co3) of Formosania lacustris (Oriental stream loach).